Consider the following 83-residue polypeptide: Cytochrome b559 subunit alpha (83 aa).

A helical transmembrane segment spans residues 21-35; it reads VIHSITIPSLFIAGW. Position 23 (histidine 23) interacts with heme.

Belongs to the PsbE/PsbF family. As to quaternary structure, heterodimer of an alpha subunit and a beta subunit. PSII is composed of 1 copy each of membrane proteins PsbA, PsbB, PsbC, PsbD, PsbE, PsbF, PsbH, PsbI, PsbJ, PsbK, PsbL, PsbM, PsbT, PsbX, PsbY, PsbZ, Psb30/Ycf12, at least 3 peripheral proteins of the oxygen-evolving complex and a large number of cofactors. It forms dimeric complexes. Heme b serves as cofactor.

Its subcellular location is the plastid. It is found in the chloroplast thylakoid membrane. Functionally, this b-type cytochrome is tightly associated with the reaction center of photosystem II (PSII). PSII is a light-driven water:plastoquinone oxidoreductase that uses light energy to abstract electrons from H(2)O, generating O(2) and a proton gradient subsequently used for ATP formation. It consists of a core antenna complex that captures photons, and an electron transfer chain that converts photonic excitation into a charge separation. The chain is Cytochrome b559 subunit alpha from Panax ginseng (Korean ginseng).